The primary structure comprises 1458 residues: DNA polymerase alpha catalytic subunit (1458 aa).

Disordered stretches follow at residues 1–25 (MSDS…RKEA) and 89–119 (DLED…SVSK). Basic and acidic residues predominate over residues 15–25 (EKTEKSGRKEA). 2 DNA-binding regions span residues 650 to 715 (RINS…VHQI) and 1241 to 1373 (QFRA…ACSK). The Zn(2+) site is built by cysteine 1280, cysteine 1283, cysteine 1307, cysteine 1312, cysteine 1345, cysteine 1350, cysteine 1368, and cysteine 1371. The CysA-type zinc finger occupies 1280–1310 (CPKCGTENIYDNVFDGSGLQIEPGLKRCSKP). Residues 1345-1371 (CEEKTCQNRTRRLPLSFSRNGPICQAC) carry the CysB motif motif.

It belongs to the DNA polymerase type-B family. As to quaternary structure, the DNA polymerase alpha complex is composed of four subunits: the catalytic subunit POLA1, the regulatory subunit POLA2, and the small and the large primase subunits PRIM1 and PRIM2 respectively. Interacts with PARP1; this interaction functions as part of the control of replication fork progression. Interacts with MCM10 and WDHD1; these interactions recruit the polymerase alpha complex to the pre-replicative complex bound to DNA. Interacts with RPA1; this interaction stabilizes the replicative complex and reduces the misincorporation rate of DNA polymerase alpha by acting as a fidelity clamp.

The protein localises to the nucleus. The enzyme catalyses DNA(n) + a 2'-deoxyribonucleoside 5'-triphosphate = DNA(n+1) + diphosphate. In terms of biological role, plays an essential role in the initiation of DNA replication. During the S phase of the cell cycle, the DNA polymerase alpha complex (composed of a catalytic subunit POLA1/p180, a regulatory subunit POLA2/p70 and two primase subunits PRIM1/p49 and PRIM2/p58) is recruited to DNA at the replicative forks via direct interactions with MCM10 and WDHD1. The primase subunit of the polymerase alpha complex initiates DNA synthesis by oligomerising short RNA primers on both leading and lagging strands. These primers are initially extended by the polymerase alpha catalytic subunit and subsequently transferred to polymerase delta and polymerase epsilon for processive synthesis on the lagging and leading strand, respectively. The reason this transfer occurs is because the polymerase alpha has limited processivity and lacks intrinsic 3' exonuclease activity for proofreading error, and therefore is not well suited for replicating long complexes. The chain is DNA polymerase alpha catalytic subunit (pola1) from Xenopus laevis (African clawed frog).